We begin with the raw amino-acid sequence, 199 residues long: Small ribosomal subunit protein uS4 (199 aa).

The S4 RNA-binding domain maps to 91–153 (ARLDNVVYRM…SKNFVVIKEA (63 aa)).

Belongs to the universal ribosomal protein uS4 family. In terms of assembly, part of the 30S ribosomal subunit. Contacts protein S5. The interaction surface between S4 and S5 is involved in control of translational fidelity.

Functionally, one of the primary rRNA binding proteins, it binds directly to 16S rRNA where it nucleates assembly of the body of the 30S subunit. In terms of biological role, with S5 and S12 plays an important role in translational accuracy. The polypeptide is Small ribosomal subunit protein uS4 (Exiguobacterium sibiricum (strain DSM 17290 / CCUG 55495 / CIP 109462 / JCM 13490 / 255-15)).